The primary structure comprises 315 residues: Taste receptor type 2 member 3 (315 aa).

At 1–5 (MGLTE) the chain is on the extracellular side. The helical transmembrane segment at 6-26 (GLFLILSGTQFALGILVNCFI) threads the bilayer. Residues 27–41 (GLVNGSSWFKTKRMS) are Cytoplasmic-facing. The chain crosses the membrane as a helical span at residues 42-62 (LSDFIITTLAFLRIILLCIIL). Topologically, residues 63–93 (TDSFLIEFSPNAHDSGVIMQIIDVSWTFTNH) are extracellular. The helical transmembrane segment at 94–114 (LSIWLATCLGVLYCLKIASFS) threads the bilayer. The Cytoplasmic segment spans residues 115 to 127 (HPTFLWLKWRVSR). A helical membrane pass occupies residues 128–148 (VMVWMLLGVLLLSCGSTASLI). Residues 149 to 185 (NEFKLYSVFRGIEATXNVTEHFRKKRSEYYLIHVLGT) lie on the Extracellular side of the membrane. Asn-165 is a glycosylation site (N-linked (GlcNAc...) asparagine). Residues 186–206 (LWYLPPLIVSLAAYFLLIFSL) form a helical membrane-spanning segment. The Cytoplasmic portion of the chain corresponds to 207 to 233 (GRHTRQMLQNGTSSRDPSTEAHKRAIR). The chain crosses the membrane as a helical span at residues 234–254 (IILSSFFLFLLYFLAFLIASF). Residues 255–265 (GNFLPKTKMAK) lie on the Extracellular side of the membrane. The helical transmembrane segment at 266-286 (MIGEVMTMFYPAGHSFILILG) threads the bilayer. Topologically, residues 287 to 315 (NSKLKQTFVEMLRCESGHLKPGSKGPIFS) are cytoplasmic.

It belongs to the G-protein coupled receptor T2R family.

Its subcellular location is the membrane. Gustducin-coupled receptor implicated in the perception of bitter compounds in the oral cavity and the gastrointestinal tract. Signals through PLCB2 and the calcium-regulated cation channel TRPM5. This chain is Taste receptor type 2 member 3 (TAS2R3), found in Pongo pygmaeus (Bornean orangutan).